A 129-amino-acid polypeptide reads, in one-letter code: Large ribosomal subunit protein bL12c (129 aa).

The span at 101 to 123 (KPIKEGMSKADAEAGKKQLEEAG) shows a compositional bias: basic and acidic residues. Positions 101–129 (KPIKEGMSKADAEAGKKQLEEAGAKATLK) are disordered.

The protein belongs to the bacterial ribosomal protein bL12 family. Homodimer. Part of the ribosomal stalk of the 50S ribosomal subunit. Forms a multimeric L10(L12)X complex, where L10 forms an elongated spine to which 2 to 4 L12 dimers bind in a sequential fashion. Binds GTP-bound translation factors.

It localises to the plastid. Its subcellular location is the chloroplast. Its function is as follows. Forms part of the ribosomal stalk which helps the ribosome interact with GTP-bound translation factors. Is thus essential for accurate translation. This Guillardia theta (Cryptophyte) protein is Large ribosomal subunit protein bL12c.